The following is a 350-amino-acid chain: (RS)-norcoclaurine 6-O-methyltransferase (350 aa).

Met-166 lines the S-adenosyl-L-methionine pocket. Asp-169 contributes to the substrate binding site. S-adenosyl-L-methionine contacts are provided by residues Thr-170, Gly-195, Asp-218, 238–239 (DM), and Lys-252. Residues 253–257 (CILHD) and Asp-306 contribute to the substrate site. His-256 acts as the Proton acceptor in catalysis.

This sequence belongs to the class I-like SAM-binding methyltransferase superfamily. Cation-independent O-methyltransferase family. COMT subfamily. In terms of assembly, homodimer. Expressed in leaf primordia of rhizomes and root endodermis.

It carries out the reaction (S)-norcoclaurine + S-adenosyl-L-methionine = (S)-coclaurine + S-adenosyl-L-homocysteine + H(+). The catalysed reaction is norcoclaurine + S-adenosyl-L-methionine = coclaurine + S-adenosyl-L-homocysteine + H(+). Its activity is regulated as follows. Inhibited by sanguinarine. Involved in the biosynthesis of coclaurine, a precursor of benzylisoquinoline alkaloids. Catalyzes the transfer of the S-methyl group of S-adenosyl-L-methionine (AdoMet) to the 6-hydroxyl group of norcoclaurine to form coclaurine. The sequence is that of (RS)-norcoclaurine 6-O-methyltransferase from Thalictrum flavum subsp. glaucum (Yellow meadow rue).